A 329-amino-acid polypeptide reads, in one-letter code: Ig gamma-2C chain C region (329 aa).

The CH1 stretch occupies residues 1 to 97; that stretch reads ARTTAPSVYP…ATKSNLIKRI (97 aa). Cysteine 27 and cysteine 82 form a disulfide bridge. The segment at 98 to 113 is hinge; sequence EPRRPKPRPPTDICSC. The interval 114-222 is CH2; that stretch reads DDNLGRPSVF…PIEKTISKPR (109 aa). 2 cysteine pairs are disulfide-bonded: cysteine 143–cysteine 203 and cysteine 249–cysteine 307. Positions 223-329 are CH3; sequence GKARTPQVYT…QKNLSRSPGK (107 aa).

In Rattus norvegicus (Rat), this protein is Ig gamma-2C chain C region.